The following is a 347-amino-acid chain: Phenylalanine--tRNA ligase alpha subunit (347 aa).

Glutamate 261 serves as a coordination point for Mg(2+).

It belongs to the class-II aminoacyl-tRNA synthetase family. Phe-tRNA synthetase alpha subunit type 1 subfamily. As to quaternary structure, tetramer of two alpha and two beta subunits. Requires Mg(2+) as cofactor.

The protein resides in the cytoplasm. The enzyme catalyses tRNA(Phe) + L-phenylalanine + ATP = L-phenylalanyl-tRNA(Phe) + AMP + diphosphate + H(+). This Streptococcus pyogenes serotype M18 (strain MGAS8232) protein is Phenylalanine--tRNA ligase alpha subunit.